A 1374-amino-acid polypeptide reads, in one-letter code: DNA-directed RNA polymerase subunit beta (1374 aa).

Belongs to the RNA polymerase beta chain family. The RNAP catalytic core consists of 2 alpha, 1 beta, 1 beta' and 1 omega subunit. When a sigma factor is associated with the core the holoenzyme is formed, which can initiate transcription.

It carries out the reaction RNA(n) + a ribonucleoside 5'-triphosphate = RNA(n+1) + diphosphate. Functionally, DNA-dependent RNA polymerase catalyzes the transcription of DNA into RNA using the four ribonucleoside triphosphates as substrates. This chain is DNA-directed RNA polymerase subunit beta, found in Methylobacterium radiotolerans (strain ATCC 27329 / DSM 1819 / JCM 2831 / NBRC 15690 / NCIMB 10815 / 0-1).